We begin with the raw amino-acid sequence, 688 residues long: ERI1 exoribonuclease 2 (688 aa).

Residues 37-226 (LIVVDFESTC…DDSRNTALLA (190 aa)) enclose the Exonuclease domain. Positions 41, 43, and 156 each coordinate Mg(2+). The Proton acceptor role is filled by E43. Position 43 (E43) interacts with AMP. Residue H213 is the Proton acceptor of the active site. AMP is bound at residue H213. D218 is a binding site for Mg(2+). Residues 337–360 (VDQLHSPTLNPPLTMQKPSKSDQL) are compositionally biased toward polar residues. Disordered regions lie at residues 337–367 (VDQL…DSSK) and 523–546 (DPLL…TKRQ). Zn(2+) contacts are provided by C594, C596, C619, and C631. The GRF-type zinc finger occupies 594 to 640 (CKCGRRSKRLIVSNNGPNHGKAFYCCPVGKYQQDRKCCGYFKWEQTL).

It belongs to the ERI2 family. Requires Mg(2+) as cofactor.

The sequence is that of ERI1 exoribonuclease 2 (Eri2) from Mus musculus (Mouse).